The sequence spans 121 residues: Met-lysine-1a (121 aa).

Residues 1-22 (MKSFVFALALIVAFACISESKS) form the signal peptide. The propeptide occupies 23 to 69 (DHTGYEEEENLEDSELTDLVTAALLEELAEASEMDDLSYTEEAGGER). Methionine amide is present on Met-120.

Expressed by the venom gland.

The protein localises to the secreted. Its function is as follows. Shows no antimicrobial activity against Gram-positive bacterium B.subtilis B-501 or Gram-negative bacterium E.coli DH5-alpha at concentrations up to 20 ug/ml. Shows no toxicity towards insect (S.carnaria) larvae. In Lachesana tarabaevi (Spider), this protein is Met-lysine-1a.